Here is a 30-residue protein sequence, read N- to C-terminus: U1-poneritoxin-Ni3b (30 aa).

It belongs to the ponericin-G family. Expressed by the venom gland.

Its subcellular location is the secreted. Shows a broad spectrum of activity against both Gram-positive and Gram-negative bacteria. Also has antimicrobial activity against S.cerevisiae. Has insecticidal and non-hemolytic activity. The sequence is that of U1-poneritoxin-Ni3b from Neoponera inversa (Ant).